The sequence spans 1051 residues: Anucleate primary sterigmata protein B (1051 aa).

Coiled-coil stretches lie at residues 10-200 (IDRL…YAIA) and 239-285 (STLV…ELKL). Residues 58–90 (KDNQGLKRKIRDLEKQLKDQQSDKESMLNHDPE) are compositionally biased toward basic and acidic residues. 2 disordered regions span residues 58–100 (KDNQ…DRDH) and 141–160 (LKSLNDGRPTGSDSGAREER). A compositionally biased stretch (basic and acidic residues) spans 294 to 303 (AGDSILDRSA). Disordered stretches follow at residues 294 to 329 (AGDSILDRSASRAQGRPSSSISDRTGQSPIDDAERE), 877 to 902 (NHPRSRSTTAGVAGSPQSSTIDLAER), 909 to 928 (NTAAESPARSSIPQPAQMTN), and 984 to 1051 (EERD…DIEV). Polar residues predominate over residues 309–321 (RPSSSISDRTGQS). 2 coiled-coil regions span residues 325 to 743 (DAER…RNSM) and 787 to 878 (RNLL…LQNH). Composition is skewed to polar residues over residues 877-897 (NHPRSRSTTAGVAGSPQSSTI) and 916-928 (ARSSIPQPAQMTN). Positions 950–1004 (NQEVWIKRLHELERRLKAEREARLLDRNGARRRLEERDAENKRLRAQLDRQRLRQ) form a coiled coil. Composition is skewed to basic and acidic residues over residues 984 to 1001 (EERDAENKRLRAQLDRQR) and 1028 to 1040 (EGYREREEEHSSS).

It localises to the cytoplasm. Functionally, involved in regulation of nuclear migration. May be involved in regulating nuclear positioning. In Emericella nidulans (strain FGSC A4 / ATCC 38163 / CBS 112.46 / NRRL 194 / M139) (Aspergillus nidulans), this protein is Anucleate primary sterigmata protein B (apsB).